A 34-amino-acid polypeptide reads, in one-letter code: Photosystem II reaction center protein Psb30 (34 aa).

A helical membrane pass occupies residues 5–25; sequence VLFQLTALIFVVAAGPLVIVL.

Belongs to the Psb30/Ycf12 family. As to quaternary structure, PSII is composed of 1 copy each of membrane proteins PsbA, PsbB, PsbC, PsbD, PsbE, PsbF, PsbH, PsbI, PsbJ, PsbK, PsbL, PsbM, PsbT, PsbX, PsbY, PsbZ, Psb30/Ycf12, peripheral proteins of the oxygen-evolving complex and a large number of cofactors. It forms dimeric complexes.

Its subcellular location is the plastid. The protein resides in the chloroplast thylakoid membrane. Its function is as follows. A core subunit of photosystem II (PSII), probably helps stabilize the reaction center. This chain is Photosystem II reaction center protein Psb30, found in Tupiella akineta (Green alga).